The chain runs to 396 residues: Acetate kinase (396 aa).

Asn-7 provides a ligand contact to Mg(2+). Lys-14 contacts ATP. Arg-86 contacts substrate. The Proton donor/acceptor role is filled by Asp-143. ATP-binding positions include 203–207 (HLGNG), 277–279 (DMR), and 325–329 (GIGEH). Glu-380 serves as a coordination point for Mg(2+).

The protein belongs to the acetokinase family. Homodimer. Mg(2+) serves as cofactor. Requires Mn(2+) as cofactor.

It localises to the cytoplasm. It carries out the reaction acetate + ATP = acetyl phosphate + ADP. The protein operates within metabolic intermediate biosynthesis; acetyl-CoA biosynthesis; acetyl-CoA from acetate: step 1/2. Catalyzes the formation of acetyl phosphate from acetate and ATP. Can also catalyze the reverse reaction. In Sulfurovum sp. (strain NBC37-1), this protein is Acetate kinase.